Here is a 292-residue protein sequence, read N- to C-terminus: uncharacterized protein (292 aa).

Residues S44 and Y106 each act as charge relay system in the active site. Y132 functions as the Proton donor in the catalytic mechanism. K161 (schiff-base intermediate with substrate) is an active-site residue.

It belongs to the DapA family. In terms of assembly, homotetramer.

The protein localises to the cytoplasm. This is an uncharacterized protein from Thermoplasma acidophilum (strain ATCC 25905 / DSM 1728 / JCM 9062 / NBRC 15155 / AMRC-C165).